Consider the following 653-residue polypeptide: Elongation factor 4 (653 aa).

The disordered stretch occupies residues 1–30; sequence MRTPCSQHRRDRPSAIGSQLPDADTLDTRQ. Positions 50–231 constitute a tr-type G domain; sequence AQIRNFCIIA…EVVRQVPPPQ (182 aa). Residues 62–67 and 178–181 each bind GTP; these read DHGKST and NKID.

Belongs to the TRAFAC class translation factor GTPase superfamily. Classic translation factor GTPase family. LepA subfamily.

It is found in the cell membrane. The enzyme catalyses GTP + H2O = GDP + phosphate + H(+). In terms of biological role, required for accurate and efficient protein synthesis under certain stress conditions. May act as a fidelity factor of the translation reaction, by catalyzing a one-codon backward translocation of tRNAs on improperly translocated ribosomes. Back-translocation proceeds from a post-translocation (POST) complex to a pre-translocation (PRE) complex, thus giving elongation factor G a second chance to translocate the tRNAs correctly. Binds to ribosomes in a GTP-dependent manner. This chain is Elongation factor 4, found in Mycobacterium bovis (strain ATCC BAA-935 / AF2122/97).